Here is a 57-residue protein sequence, read N- to C-terminus: Large ribosomal subunit protein bL32 (57 aa).

It belongs to the bacterial ribosomal protein bL32 family.

The protein is Large ribosomal subunit protein bL32 (rpmF) of Halalkalibacterium halodurans (strain ATCC BAA-125 / DSM 18197 / FERM 7344 / JCM 9153 / C-125) (Bacillus halodurans).